Consider the following 67-residue polypeptide: Large ribosomal subunit protein uL29 (67 aa).

It belongs to the universal ribosomal protein uL29 family.

In Sphingopyxis alaskensis (strain DSM 13593 / LMG 18877 / RB2256) (Sphingomonas alaskensis), this protein is Large ribosomal subunit protein uL29.